Reading from the N-terminus, the 337-residue chain is tRNA N6-adenosine threonylcarbamoyltransferase (337 aa).

Fe cation contacts are provided by H111 and H115. Residues 134-138, D167, G180, and N272 each bind substrate; that span reads LVSGG. D300 provides a ligand contact to Fe cation.

The protein belongs to the KAE1 / TsaD family. The cofactor is Fe(2+).

The protein resides in the cytoplasm. It catalyses the reaction L-threonylcarbamoyladenylate + adenosine(37) in tRNA = N(6)-L-threonylcarbamoyladenosine(37) in tRNA + AMP + H(+). In terms of biological role, required for the formation of a threonylcarbamoyl group on adenosine at position 37 (t(6)A37) in tRNAs that read codons beginning with adenine. Is involved in the transfer of the threonylcarbamoyl moiety of threonylcarbamoyl-AMP (TC-AMP) to the N6 group of A37, together with TsaE and TsaB. TsaD likely plays a direct catalytic role in this reaction. The protein is tRNA N6-adenosine threonylcarbamoyltransferase of Escherichia coli O127:H6 (strain E2348/69 / EPEC).